We begin with the raw amino-acid sequence, 298 residues long: Acetyl-coenzyme A carboxylase carboxyl transferase subunit beta 1 (298 aa).

A CoA carboxyltransferase N-terminal domain is found at Met-26 to Ala-294. Zn(2+)-binding residues include Cys-30, Cys-33, Cys-49, and Cys-51. Residues Cys-30 to Cys-51 form a C4-type zinc finger.

This sequence belongs to the AccD/PCCB family. In terms of assembly, acetyl-CoA carboxylase is a heterohexamer composed of biotin carboxyl carrier protein (AccB), biotin carboxylase (AccC) and two subunits each of ACCase subunit alpha (AccA) and ACCase subunit beta (AccD). Zn(2+) is required as a cofactor.

Its subcellular location is the cytoplasm. The catalysed reaction is N(6)-carboxybiotinyl-L-lysyl-[protein] + acetyl-CoA = N(6)-biotinyl-L-lysyl-[protein] + malonyl-CoA. The protein operates within lipid metabolism; malonyl-CoA biosynthesis; malonyl-CoA from acetyl-CoA: step 1/1. Its function is as follows. Component of the acetyl coenzyme A carboxylase (ACC) complex. Biotin carboxylase (BC) catalyzes the carboxylation of biotin on its carrier protein (BCCP) and then the CO(2) group is transferred by the transcarboxylase to acetyl-CoA to form malonyl-CoA. In Roseiflexus castenholzii (strain DSM 13941 / HLO8), this protein is Acetyl-coenzyme A carboxylase carboxyl transferase subunit beta 1.